The chain runs to 521 residues: 2,3-bisphosphoglycerate-independent phosphoglycerate mutase (521 aa).

Aspartate 18 and serine 68 together coordinate Mn(2+). Residue serine 68 is the Phosphoserine intermediate of the active site. Substrate is bound by residues histidine 129, 158 to 159, arginine 190, arginine 196, 266 to 269, and lysine 343; these read RD and RSDR. Positions 410, 414, 451, 452, and 470 each coordinate Mn(2+).

The protein belongs to the BPG-independent phosphoglycerate mutase family. Monomer. Mn(2+) serves as cofactor.

It catalyses the reaction (2R)-2-phosphoglycerate = (2R)-3-phosphoglycerate. Its pathway is carbohydrate degradation; glycolysis; pyruvate from D-glyceraldehyde 3-phosphate: step 3/5. Catalyzes the interconversion of 2-phosphoglycerate and 3-phosphoglycerate. In Hydrogenovibrio crunogenus (strain DSM 25203 / XCL-2) (Thiomicrospira crunogena), this protein is 2,3-bisphosphoglycerate-independent phosphoglycerate mutase.